The following is an 81-amino-acid chain: Delta-conotoxin-like Ac6.3 (81 aa).

Residues 1–22 (MKLTCVMIVAVLFLTAWTFVTA) form the signal peptide. The propeptide occupies 23 to 51 (DDSRNGLENLSPKARHEMKNPEASKSNKR). 3 disulfide bridges follow: Cys-54/Cys-69, Cys-61/Cys-73, and Cys-68/Cys-78.

It belongs to the conotoxin O1 superfamily. As to expression, expressed by the venom duct.

It is found in the secreted. In terms of biological role, delta-conotoxins bind to site 6 of voltage-gated sodium channels (Nav) and inhibit the inactivation process. In Conus achatinus (Little frog cone), this protein is Delta-conotoxin-like Ac6.3.